We begin with the raw amino-acid sequence, 2678 residues long: Mediator of RNA polymerase II transcription subunit 13 (2678 aa).

Disordered stretches follow at residues 1 to 52, 140 to 285, 495 to 524, 553 to 615, 852 to 993, 1070 to 1253, 1278 to 1394, 1462 to 1502, 1806 to 1838, 2075 to 2105, 2225 to 2307, and 2656 to 2678; these read MMGT…GYNS, SKKP…QPIS, NSNN…QQQQ, QQQQ…NNNI, SPSS…QQQQ, TSHY…KPFL, LPHN…QDES, SPFS…NNHH, FSGS…SMDD, QNQN…QTQT, SSSS…QEQK, and KLTP…SNNT. Low complexity-rich tracts occupy residues 15-48, 144-162, and 169-186; these read SGSN…PTTS, INNS…TDSS, and NSPS…NSNN. The segment covering 187-206 has biased composition (polar residues); that stretch reads VTKDSPPNATNKMSTSPKSL. Residues 207–276 show a composition bias toward low complexity; it reads SPTISNNNNN…SPPTVASVTS (70 aa). 2 stretches are compositionally biased toward low complexity: residues 553–573 and 587–615; these read QQQQ…DNNN and SSSS…NNNI. Polar residues predominate over residues 855-872; sequence SPLTQHPSSPHSPFNNVN. Residues 901 to 916 are compositionally biased toward basic residues; it reads KKRHGKSQKKGRSSKR. A compositionally biased stretch (low complexity) spans 922 to 950; sequence SNNNNNNNTTTTSTITATTTTTTPTAATT. Composition is skewed to polar residues over residues 966–979 and 1079–1090; these read NIQE…LTTV and PTQNGSQKNNQR. Over residues 1109–1150 the composition is skewed to low complexity; the sequence is TTTTTTTTTTTPTPNPTTTTTQPQTQPQQQSQQQQQPQQTNP. The span at 1151–1195 shows a compositional bias: polar residues; sequence ILPTNSNLITNQKPQQYQPPLQDPFQSIDSQQPKSIQSPTLTNQP. The segment covering 1201-1211 has biased composition (low complexity); it reads PTLTNQPLQQY. Over residues 1281–1306 the composition is skewed to polar residues; the sequence is NTEQSPSNDDLSNPNHLHHGTPTSAI. The segment covering 1312–1321 has biased composition (low complexity); it reads SSSSSGNNMI. Gly residues predominate over residues 1322-1343; the sequence is GSGGIVGSGGGNTNVSGSGGGM. Basic residues predominate over residues 1359 to 1371; the sequence is PHHHHHHHHHHHP. Residues 1475–1497 are compositionally biased toward low complexity; it reads TTTNNNNNHNNNNNNNHPNNHHQ. Positions 1806–1819 are enriched in polar residues; that stretch reads FSGSSGLNNSNDRN. The segment covering 2658-2678 has biased composition (polar residues); the sequence is TPNSKQSPSPINSPHLNSNNT.

It belongs to the Mediator complex subunit 13 family. Component of the Mediator complex.

It localises to the nucleus. Component of the Mediator complex, a coactivator involved in the regulated transcription of nearly all RNA polymerase II-dependent genes. Mediator functions as a bridge to convey information from gene-specific regulatory proteins to the basal RNA polymerase II transcription machinery. Mediator is recruited to promoters by direct interactions with regulatory proteins and serves as a scaffold for the assembly of a functional preinitiation complex with RNA polymerase II and the general transcription factors. Required for the starvation-induced activation of the ACA (adenylyl cyclase) expression pathway at the growth/differentiation transition. This Dictyostelium discoideum (Social amoeba) protein is Mediator of RNA polymerase II transcription subunit 13 (amiB).